We begin with the raw amino-acid sequence, 322 residues long: Phospho-N-acetylmuramoyl-pentapeptide-transferase (322 aa).

Transmembrane regions (helical) follow at residues 10-30, 51-71, 79-99, 107-127, 146-166, 178-198, 203-223, 227-247, 250-270, and 302-322; these read YTAL…IPML, NGTP…TGLT, MAVG…DDFI, LGLK…YVAF, FVIN…VAIV, LASG…SSIA, VAVL…FNSY, VFMG…FSVL, SVLI…SVLI, and VVFI…IAVF.

Belongs to the glycosyltransferase 4 family. MraY subfamily. The cofactor is Mg(2+).

The protein localises to the cell membrane. The catalysed reaction is UDP-N-acetyl-alpha-D-muramoyl-L-alanyl-gamma-D-glutamyl-meso-2,6-diaminopimeloyl-D-alanyl-D-alanine + di-trans,octa-cis-undecaprenyl phosphate = di-trans,octa-cis-undecaprenyl diphospho-N-acetyl-alpha-D-muramoyl-L-alanyl-D-glutamyl-meso-2,6-diaminopimeloyl-D-alanyl-D-alanine + UMP. It participates in cell wall biogenesis; peptidoglycan biosynthesis. In terms of biological role, catalyzes the initial step of the lipid cycle reactions in the biosynthesis of the cell wall peptidoglycan: transfers peptidoglycan precursor phospho-MurNAc-pentapeptide from UDP-MurNAc-pentapeptide onto the lipid carrier undecaprenyl phosphate, yielding undecaprenyl-pyrophosphoryl-MurNAc-pentapeptide, known as lipid I. This is Phospho-N-acetylmuramoyl-pentapeptide-transferase from Clostridioides difficile (strain 630) (Peptoclostridium difficile).